Reading from the N-terminus, the 257-residue chain is MSLLSKTRELNTLLQKHKGIAVDFKDVAQTISSVTVTNVFIVSRRGKILGSSLNELLKSQRIIQMLEERHIPSEYTERLMEVKQTESNIDIDNVLTVFPPENRELFIDSRTTIFPILGGGERLGTLVLGRVHDDFNENDLVLGEYAATVIGMEILREKHSEVEKEARDKAAITMAINSLSYSEKEAIEHIFEELGGTEGLLIASKVADGVGITRSVIVNALRKLESAGVIESRSLGMKGTFIKVKKEKFLDELEKSK.

The interval 1 to 155 is GAF domain; the sequence is MSLLSKTREL…AATVIGMEIL (155 aa). The segment at residues 203–222 is a DNA-binding region (H-T-H motif); sequence ASKVADGVGITRSVIVNALR.

It belongs to the CodY family.

It localises to the cytoplasm. Functionally, DNA-binding global transcriptional regulator which is involved in the adaptive response to starvation and acts by directly or indirectly controlling the expression of numerous genes in response to nutrient availability. During rapid exponential growth, CodY is highly active and represses genes whose products allow adaptation to nutrient depletion. The sequence is that of Global transcriptional regulator CodY from Staphylococcus aureus (strain bovine RF122 / ET3-1).